The chain runs to 500 residues: NAD(P)H-quinone oxidoreductase chain 4, chloroplastic (500 aa).

14 helical membrane passes run 4–24, 35–55, 87–107, 113–130, 134–154, 167–187, 211–231, 242–262, 272–292, 305–325, 330–350, 386–406, 416–436, and 462–482; these read FPWLTIIVVFPISAGSLMLFL, YTICICILELLITTYAFCYNF, IGTILLTGFITTLATLAAFPV, LFHFLMLAMYSGQIGSFS, LLLFFIMWELELIPVYLLLSM, FILYTAGSSIFLLIGVLGISL, IILYIGFLIAFAVKSPLIPLH, HYSTCMLLAGILLKMGAYGLV, AHSLFSPWLMVVGTIQIIYAA, IAYSSVSHMGFIIIGIASITD, GAILQIISHGFIGAALFFLAG, LALPGMSGFVAEFIVFFGIIT, IFIIVVMAIGMILTPIYLLSM, and LFLSISSLLPIIGMGIYPDFV.

Belongs to the complex I subunit 4 family.

It is found in the plastid. The protein localises to the chloroplast thylakoid membrane. The enzyme catalyses a plastoquinone + NADH + (n+1) H(+)(in) = a plastoquinol + NAD(+) + n H(+)(out). The catalysed reaction is a plastoquinone + NADPH + (n+1) H(+)(in) = a plastoquinol + NADP(+) + n H(+)(out). The protein is NAD(P)H-quinone oxidoreductase chain 4, chloroplastic of Aethionema cordifolium (Lebanon stonecress).